We begin with the raw amino-acid sequence, 431 residues long: Histidine--tRNA ligase (431 aa).

It belongs to the class-II aminoacyl-tRNA synthetase family. In terms of assembly, homodimer.

The protein localises to the cytoplasm. The enzyme catalyses tRNA(His) + L-histidine + ATP = L-histidyl-tRNA(His) + AMP + diphosphate + H(+). This is Histidine--tRNA ligase from Limosilactobacillus fermentum (strain NBRC 3956 / LMG 18251) (Lactobacillus fermentum).